We begin with the raw amino-acid sequence, 66 residues long: Large ribosomal subunit protein uL29 (66 aa).

This sequence belongs to the universal ribosomal protein uL29 family.

This chain is Large ribosomal subunit protein uL29, found in Rhizobium leguminosarum bv. trifolii (strain WSM2304).